The primary structure comprises 212 residues: ATP-dependent dethiobiotin synthetase BioD (212 aa).

ATP is bound at residue 13–18 (GIGKTV). Thr-17 contacts Mg(2+). Residue Lys-33 is part of the active site. Ser-37 serves as a coordination point for substrate. Residue Glu-100 participates in Mg(2+) binding. ATP is bound by residues 100-103 (EGAG) and 184-186 (PRL).

This sequence belongs to the dethiobiotin synthetase family. In terms of assembly, homodimer. The cofactor is Mg(2+).

The protein resides in the cytoplasm. The enzyme catalyses (7R,8S)-7,8-diammoniononanoate + CO2 + ATP = (4R,5S)-dethiobiotin + ADP + phosphate + 3 H(+). It functions in the pathway cofactor biosynthesis; biotin biosynthesis; biotin from 7,8-diaminononanoate: step 1/2. Its function is as follows. Catalyzes a mechanistically unusual reaction, the ATP-dependent insertion of CO2 between the N7 and N8 nitrogen atoms of 7,8-diaminopelargonic acid (DAPA, also called 7,8-diammoniononanoate) to form a ureido ring. The polypeptide is ATP-dependent dethiobiotin synthetase BioD (Brucella anthropi (strain ATCC 49188 / DSM 6882 / CCUG 24695 / JCM 21032 / LMG 3331 / NBRC 15819 / NCTC 12168 / Alc 37) (Ochrobactrum anthropi)).